Consider the following 369-residue polypeptide: Glycolate oxidase 1 (369 aa).

The region spanning 1–360 (MGEITNVMEY…TRAHIYTDAD (360 aa)) is the FMN hydroxy acid dehydrogenase domain. Tyr25 lines the glyoxylate pocket. FMN is bound by residues 78–80 (PSA), Ser107, 128–130 (QLY), and Thr156. Tyr130 lines the glyoxylate pocket. Residue Arg165 participates in glyoxylate binding. 2 residues coordinate FMN: Lys231 and Ser253. Residues His255 and Arg258 each coordinate glyoxylate. Residue His255 is the Proton acceptor of the active site. FMN contacts are provided by residues 286-290 (DGGVR) and 309-310 (GR). The short motif at 367 to 369 (PRL) is the Microbody targeting signal element.

Belongs to the FMN-dependent alpha-hydroxy acid dehydrogenase family. In terms of assembly, homotetramer. Interacts with rice dwarf virus (RDV) P8. This interaction promotes viral P8 relocation to virus factories peripheral to peroxisomes. FMN is required as a cofactor.

The protein resides in the peroxisome. The catalysed reaction is glycolate + O2 = glyoxylate + H2O2. It functions in the pathway photosynthesis; photorespiration; glycine from 2-phosphoglycolate: step 2/3. Functionally, catalyzes the oxidation of glycolate to glyoxylate, with a reduction of O2 to H2O2. Is a key enzyme in photorespiration in plants. Can exert a strong regulation over photosynthesis, possibly through a feed-back inhibition on Rubisco activase. Does not seem to play a role in oxalate accumulation. The chain is Glycolate oxidase 1 (GLO1) from Oryza sativa subsp. indica (Rice).